A 222-amino-acid chain; its full sequence is Phosphoglycolate phosphatase (222 aa).

The active-site Nucleophile is the Asp-12. Positions 12, 14, and 175 each coordinate Mg(2+).

It belongs to the HAD-like hydrolase superfamily. CbbY/CbbZ/Gph/YieH family. It depends on Mg(2+) as a cofactor.

The catalysed reaction is 2-phosphoglycolate + H2O = glycolate + phosphate. It participates in organic acid metabolism; glycolate biosynthesis; glycolate from 2-phosphoglycolate: step 1/1. Specifically catalyzes the dephosphorylation of 2-phosphoglycolate. Is involved in the dissimilation of the intracellular 2-phosphoglycolate formed during the DNA repair of 3'-phosphoglycolate ends, a major class of DNA lesions induced by oxidative stress. This is Phosphoglycolate phosphatase from Chromobacterium violaceum (strain ATCC 12472 / DSM 30191 / JCM 1249 / CCUG 213 / NBRC 12614 / NCIMB 9131 / NCTC 9757 / MK).